The following is a 229-amino-acid chain: Trehalose-6-phosphate phosphatase-related protein (229 aa).

The active-site Nucleophile is aspartate 5. Mg(2+) is bound by residues aspartate 5, aspartate 7, and aspartate 177. 5-7 (DYD) provides a ligand contact to substrate.

Belongs to the trehalose phosphatase family. Mg(2+) serves as cofactor.

It carries out the reaction alpha,alpha-trehalose 6-phosphate + H2O = alpha,alpha-trehalose + phosphate. The protein operates within glycan biosynthesis; trehalose biosynthesis. In terms of biological role, removes the phosphate from trehalose 6-phosphate (Tre6P) to produce free trehalose. Also catalyzes the dephosphorylation of para-nitrophenyl phosphate (pNPP), but with lesser efficiency (in vitro). This is Trehalose-6-phosphate phosphatase-related protein from Thermoplasma acidophilum (strain ATCC 25905 / DSM 1728 / JCM 9062 / NBRC 15155 / AMRC-C165).